A 379-amino-acid polypeptide reads, in one-letter code: Homoserine O-acetyltransferase (379 aa).

The region spanning 54–332 (NAILVCHALS…PYQSEEIVKS (279 aa)) is the AB hydrolase-1 domain. Catalysis depends on Ser-159, which acts as the Nucleophile. A substrate-binding site is contributed by Arg-228. Residues Asp-318 and His-352 contribute to the active site. Asp-353 contacts substrate.

Belongs to the AB hydrolase superfamily. MetX family. Homodimer.

Its subcellular location is the cytoplasm. It catalyses the reaction L-homoserine + acetyl-CoA = O-acetyl-L-homoserine + CoA. Its pathway is amino-acid biosynthesis; L-methionine biosynthesis via de novo pathway; O-acetyl-L-homoserine from L-homoserine: step 1/1. Transfers an acetyl group from acetyl-CoA to L-homoserine, forming acetyl-L-homoserine. The polypeptide is Homoserine O-acetyltransferase (Leptospira meyeri).